A 360-amino-acid polypeptide reads, in one-letter code: Phospho-N-acetylmuramoyl-pentapeptide-transferase (360 aa).

The Periplasmic segment spans residues 1 to 25 (MLVWLAEHLVKYYSGFNVFSYLTFR). The chain crosses the membrane as a helical span at residues 26-46 (AIVSLLTALFISLWMGPRMIA). The Cytoplasmic segment spans residues 47–71 (RLQKLSFGQVVRNDGPESHFSKRGT). Residues 72-92 (PTMGGIMILTAIVISVLLWAY) form a helical membrane-spanning segment. Position 93 (Pro93) is a topological domain, periplasmic. The helical transmembrane segment at 94–114 (SNPYVWCVLVVLIGYGIIGFV) threads the bilayer. Residues 115–131 (DDYRKVVRKDTKGLIAR) lie on the Cytoplasmic side of the membrane. The helical transmembrane segment at 132 to 152 (WKYFWMSVIALGVAFALYLVG) threads the bilayer. Topologically, residues 153 to 167 (KDTPVTQLVVPFFKD) are periplasmic. Residues 168 to 188 (VMPQLGLFYILLSYFVIVGTG) form a helical membrane-spanning segment. The Cytoplasmic portion of the chain corresponds to 189–198 (NAVNLTDGLD). The chain crosses the membrane as a helical span at residues 199-219 (GLAIMPTVFVAAGFALVAWAT). The Periplasmic segment spans residues 220 to 235 (GNMNFANYLHIPYLRH). Residues 236–256 (AGELVIVCTAIVGAGLGFLWF) form a helical membrane-spanning segment. The Cytoplasmic segment spans residues 257–262 (NTYPAQ). A helical membrane pass occupies residues 263-283 (VFMGDVGSLALGGALGIIAVL). Topologically, residues 284–287 (LRQE) are periplasmic. A helical membrane pass occupies residues 288–308 (FLLVIMGGVFVVETLSVILQV). Topologically, residues 309–337 (GSFKLRGQRIFRMAPIHHHYELKGWPEPR) are cytoplasmic. The chain crosses the membrane as a helical span at residues 338-358 (VIVRFWIISLMLVLIGLATLK). The Periplasmic portion of the chain corresponds to 359 to 360 (VR).

This sequence belongs to the glycosyltransferase 4 family. MraY subfamily. Requires Mg(2+) as cofactor.

The protein localises to the cell inner membrane. The enzyme catalyses UDP-N-acetyl-alpha-D-muramoyl-L-alanyl-gamma-D-glutamyl-meso-2,6-diaminopimeloyl-D-alanyl-D-alanine + di-trans,octa-cis-undecaprenyl phosphate = di-trans,octa-cis-undecaprenyl diphospho-N-acetyl-alpha-D-muramoyl-L-alanyl-D-glutamyl-meso-2,6-diaminopimeloyl-D-alanyl-D-alanine + UMP. It functions in the pathway cell wall biogenesis; peptidoglycan biosynthesis. Its function is as follows. Catalyzes the initial step of the lipid cycle reactions in the biosynthesis of the cell wall peptidoglycan: transfers peptidoglycan precursor phospho-MurNAc-pentapeptide from UDP-MurNAc-pentapeptide onto the lipid carrier undecaprenyl phosphate, yielding undecaprenyl-pyrophosphoryl-MurNAc-pentapeptide, known as lipid I. The sequence is that of Phospho-N-acetylmuramoyl-pentapeptide-transferase from Salmonella paratyphi C (strain RKS4594).